Consider the following 243-residue polypeptide: Carboxy-S-adenosyl-L-methionine synthase (243 aa).

S-adenosyl-L-methionine is bound by residues Tyr40, 65 to 67, 90 to 91, 118 to 119, Asn133, and Arg200; these read GCS, DN, and DI.

The protein belongs to the class I-like SAM-binding methyltransferase superfamily. Cx-SAM synthase family. In terms of assembly, homodimer.

It catalyses the reaction prephenate + S-adenosyl-L-methionine = carboxy-S-adenosyl-L-methionine + 3-phenylpyruvate + H2O. Its function is as follows. Catalyzes the conversion of S-adenosyl-L-methionine (SAM) to carboxy-S-adenosyl-L-methionine (Cx-SAM). The polypeptide is Carboxy-S-adenosyl-L-methionine synthase (Shewanella baltica (strain OS223)).